The chain runs to 215 residues: Endoplasmic reticulum vesicle protein 25 (215 aa).

An N-terminal signal peptide occupies residues 1–21; that stretch reads MQSLITYIALVFSLFVSSAIG. The Lumenal segment spans residues 22-184; it reads LHLEVPALPN…TNESTNSRVK (163 aa). The GOLD domain maps to 34-125; that stretch reads PVCIRDFVQE…VRSVELDIES (92 aa). The helical transmembrane segment at 185–205 threads the bilayer; it reads WFSIVVIASLVGFGVWQIQYL. Residues 206–215 lie on the Cytoplasmic side of the membrane; it reads RHYFKVKHII.

The protein belongs to the EMP24/GP25L family.

The protein localises to the endoplasmic reticulum membrane. Its subcellular location is the golgi apparatus membrane. Functionally, constituent of COPII-coated endoplasmic reticulum-derived transport vesicles. Required for efficient transport of a subset of secretory proteins to the Golgi. Facilitates retrograde transport from the Golgi to the endoplasmic reticulum. This is Endoplasmic reticulum vesicle protein 25 (ERV25) from Candida albicans (strain SC5314 / ATCC MYA-2876) (Yeast).